The sequence spans 291 residues: Transmembrane O-methyltransferase (291 aa).

Residues 31-51 (VGTMSPAIALAFLPLVVTLLV) form a helical membrane-spanning segment. Residues glutamate 137, 139 to 140 (GT), serine 145, glutamate 163, and serine 193 each bind S-adenosyl-L-methionine.

Belongs to the class I-like SAM-binding methyltransferase superfamily. Cation-dependent O-methyltransferase family. As to quaternary structure, interacts with LHFPL5, PCDH15, TMC1, TMC2 and TMIE. Interacts directly with TMC1. The interaction of TOMT with TMC1 and TMC2 is required for the transportation of TMC1/2 into the stereocilia of hair cells.

Its subcellular location is the membrane. It is found in the cytoplasm. It localises to the endoplasmic reticulum. It carries out the reaction a catechol + S-adenosyl-L-methionine = a guaiacol + S-adenosyl-L-homocysteine + H(+). Functionally, catalyzes the O-methylation, and thereby the inactivation, of catecholamine neurotransmitters and catechol hormones. Required for auditory function. Component of the cochlear hair cell's mechanotransduction (MET) machinery. Involved in the assembly of the asymmetric tip-link MET complex. Required for transportation of TMC1 and TMC2 proteins into the mechanically sensitive stereocilia of the hair cells. The function in MET is independent of the enzymatic activity. The chain is Transmembrane O-methyltransferase from Pan troglodytes (Chimpanzee).